The primary structure comprises 520 residues: Na(+)/H(+) antiporter NhaB (520 aa).

The next 12 membrane-spanning stretches (helical) occupy residues 27–49, 62–82, 97–117, 120–140, 144–164, 202–222, 238–258, 303–323, 348–368, 391–411, 447–467, and 475–495; these read GFLI…LLVI, YPLL…MTSA, LLLI…LLIF, LLLG…AAAF, FLDA…FYGI, LMMH…VGEP, FLLR…VTCI, GLIG…VGLI, TEAL…AVII, LFYL…VGTV, ATPN…APLI, and VWMA…CVQF.

Belongs to the NhaB Na(+)/H(+) (TC 2.A.34) antiporter family.

Its subcellular location is the cell inner membrane. The catalysed reaction is 2 Na(+)(in) + 3 H(+)(out) = 2 Na(+)(out) + 3 H(+)(in). Na(+)/H(+) antiporter that extrudes sodium in exchange for external protons. The polypeptide is Na(+)/H(+) antiporter NhaB (Cronobacter sakazakii (strain ATCC BAA-894) (Enterobacter sakazakii)).